Consider the following 495-residue polypeptide: Nitrogen fixation regulatory protein (495 aa).

A PAS 1 domain is found at 23–93 (HPGLFFTMVE…QEMWQTLLQR (71 aa)). The region spanning 94–148 (QPWRGQLINQARDGGLYLVDIDITPVLNPQGELEHYLAMQRDISVSYTLEQRLRN) is the PAC domain. Residues 151-174 (TLMEAVLNNIPAAVVVVDEQDRVV) enclose the PAS 2; truncated domain.

The cofactor is FAD.

Required for the inhibition of NifA activity in response to oxygen and low level of fixed nitrogen. The protein is Nitrogen fixation regulatory protein (nifL) of Klebsiella pneumoniae.